The following is a 161-amino-acid chain: Ribosome maturation factor RimP (161 aa).

This sequence belongs to the RimP family.

Its subcellular location is the cytoplasm. Functionally, required for maturation of 30S ribosomal subunits. The protein is Ribosome maturation factor RimP of Rickettsia africae (strain ESF-5).